The chain runs to 156 residues: Calglandulin (156 aa).

EF-hand domains follow at residues 8 to 43, 44 to 79, 82 to 117, and 118 to 153; these read EQIT…IGIN, PTKR…YHEK, NQDE…AGEP, and LNEH…ESFK. Asp-131, Asp-133, Asp-135, Thr-137, and Glu-142 together coordinate Ca(2+).

This sequence belongs to the calmodulin family. Calglandulin subfamily. Expressed by the venom gland.

It localises to the cytoplasm. May be involved in the cellular control mechanism of the secretion of toxins from the gland into the venom. The protein is Calglandulin of Tropidechis carinatus (Australian rough-scaled snake).